Consider the following 464-residue polypeptide: Glucan 1,3-beta-glucosidase 3 (464 aa).

It belongs to the glycosyl hydrolase 5 (cellulase A) family.

It catalyses the reaction Successive hydrolysis of beta-D-glucose units from the non-reducing ends of (1-&gt;3)-beta-D-glucans, releasing alpha-glucose.. The protein is Glucan 1,3-beta-glucosidase 3 (exg3) of Schizosaccharomyces pombe (strain 972 / ATCC 24843) (Fission yeast).